We begin with the raw amino-acid sequence, 411 residues long: Calmodulin-binding receptor-like cytoplasmic kinase 2 (411 aa).

2 disordered regions span residues 1 to 44 and 66 to 99; these read MPSR…DTTT and SNYI…YGNA. 2 stretches are compositionally biased toward low complexity: residues 16-44 and 66-95; these read TTSS…DTTT and SNYI…VQRS. Phosphothreonine is present on threonine 108. The Protein kinase domain occupies 119 to 398; sequence FSPSFRIGQG…MKKCSEILWG (280 aa). ATP contacts are provided by residues 125 to 133 and lysine 147; that span reads IGQGGFGTV. The tract at residues 134 to 159 is caM-binding; that stretch reads YKVKLRDGKTFAVKRAKKSMHDDRQG. Residue aspartate 247 is the Proton acceptor of the active site. Phosphoserine occurs at positions 251 and 283. Phosphothreonine occurs at positions 284 and 289. Phosphotyrosine is present on tyrosine 297.

It belongs to the protein kinase superfamily. Ser/Thr protein kinase family. Interacts with calmodulin (CaM) in a Ca(2+)-dependent manner.

It localises to the cytoplasm. The enzyme catalyses L-seryl-[protein] + ATP = O-phospho-L-seryl-[protein] + ADP + H(+). It catalyses the reaction L-threonyl-[protein] + ATP = O-phospho-L-threonyl-[protein] + ADP + H(+). The chain is Calmodulin-binding receptor-like cytoplasmic kinase 2 (CRCK2) from Arabidopsis thaliana (Mouse-ear cress).